A 363-amino-acid chain; its full sequence is Fructose-bisphosphate aldolase A (363 aa).

Beta-D-fructose 1,6-bisphosphate is bound at residue Arg43. The active-site Proton acceptor is the Glu188. Catalysis depends on Lys230, which acts as the Schiff-base intermediate with dihydroxyacetone-P. Beta-D-fructose 1,6-bisphosphate contacts are provided by residues 272–274 (SGG), Ser301, and Arg304.

It belongs to the class I fructose-bisphosphate aldolase family. Tetramer.

It carries out the reaction beta-D-fructose 1,6-bisphosphate = D-glyceraldehyde 3-phosphate + dihydroxyacetone phosphate. It participates in carbohydrate degradation; glycolysis; D-glyceraldehyde 3-phosphate and glycerone phosphate from D-glucose: step 4/4. Plays a key role in glycolysis and gluconeogenesis. The chain is Fructose-bisphosphate aldolase A from Salmo salar (Atlantic salmon).